The primary structure comprises 615 residues: MFSVRDLCLVLSLVGAIKTEDGSDPPSGDFLTEGGGVRGPRLVERQQSACKETGWPFCSDEDWNTKCPSGCRMKGLIDEVDQDFTSRINKLRDSLFNYQKNSKDSNTLTKNIVELMRGDFAKANNNDNTFKQISEDLRSRIEILRRKVIEQVQRIKVLQKNVRDQLVDMKRLEVDIDIKIRSCKGSCSRALEHKVDLEDYKNQQKQLEQVIAINLLPSRDIQYLPLIKMSTITGPVPREFKSQLQEAPLEWKALLEMQQTKMVLETFGGDGHARGDSVSQGTGLAPGSPRKPGTSSIGNVNPGSYGPGSSGTWNPGRPEPGSAGTWNPGRPEPGSAGTWNPGRPEPGSAGTWNPGRPEPGSAGTWNPGRPEPGSAGTWNTGSSGSSSFRPDSSGHGNIRPSSPDWGTFREEGSVSSGTKQEFHTGKLVTTKGDKELLIDNEKVTSGHTTTTRRSCSKVITKTVTNADGRTETTKEVVKSEDGSDCGDADFDWHHTFPSRGNLDDFFHRDKDDFFTRSSHEFDGRTGLAPEFAALGESGSSSSKTSTHSKQFVSSSTTVNRGGSAIESKHFKMEDEAESLEDLGFKGAHGTQKGHTKARPARGIHTSPLGEPSLTP.

The signal sequence occupies residues 1 to 19 (MFSVRDLCLVLSLVGAIKT). Residues 71–602 (CRMKGLIDEV…GHTKARPARG (532 aa)) are a coiled coil. Residues 267-427 (FGGDGHARGD…TKQEFHTGKL (161 aa)) are disordered. Over residues 293–302 (GTSSIGNVNP) the composition is skewed to polar residues. Thr325 carries an O-linked (GalNAc...) threonine glycan. Residues 373-396 (GSAGTWNTGSSGSSSFRPDSSGHG) show a composition bias toward low complexity. Cys455 and Cys485 are oxidised to a cystine. Residues 530-615 (EFAALGESGS…SPLGEPSLTP (86 aa)) form a disordered region. Residues 537–549 (SGSSSSKTSTHSK) show a composition bias toward low complexity. Positions 550-560 (QFVSSSTTVNR) are enriched in polar residues. Residues 591–601 (QKGHTKARPAR) show a composition bias toward basic residues.

In terms of assembly, heterohexamer; disulfide linked. Contains 2 sets of 3 non-identical chains (alpha, beta and gamma). The 2 heterotrimers are in head to head conformation with the N-termini in a small central domain. Conversion of fibrinogen to fibrin is triggered by thrombin, which cleaves fibrinopeptides A and B from alpha and beta chains, and thus exposes the N-terminal polymerization sites responsible for the formation of the soft clot. The soft clot is converted into the hard clot by factor XIIIA which catalyzes the epsilon-(gamma-glutamyl)lysine cross-linking between gamma chains (stronger) and between alpha chains (weaker) of different monomers. Post-translationally, forms F13A-mediated cross-links between a glutamine and the epsilon-amino group of a lysine residue, forming fibronectin-fibrinogen heteropolymers.

It is found in the secreted. Cleaved by the protease thrombin to yield monomers which, together with fibrinogen beta (FGB) and fibrinogen gamma (FGG), polymerize to form an insoluble fibrin matrix. Fibrin has a major function in hemostasis as one of the primary components of blood clots. In addition, functions during the early stages of wound repair to stabilize the lesion and guide cell migration during re-epithelialization. Was originally thought to be essential for platelet aggregation, based on in vitro studies using anticoagulated blood. However, subsequent studies have shown that it is not absolutely required for thrombus formation in vivo. Enhances expression of SELP in activated platelets via an ITGB3-dependent pathway. Maternal fibrinogen is essential for successful pregnancy. Fibrin deposition is also associated with infection, where it protects against IFNG-mediated hemorrhage. May also facilitate the immune response via both innate and T-cell mediated pathways. This chain is Fibrinogen alpha chain (FGA), found in Bos taurus (Bovine).